The primary structure comprises 209 residues: Ion-translocating oxidoreductase complex subunit G (209 aa).

Residues Gly-9 to Leu-29 form a helical membrane-spanning segment. Thr-175 carries the FMN phosphoryl threonine modification.

Belongs to the RnfG family. As to quaternary structure, the complex is composed of six subunits: RnfA, RnfB, RnfC, RnfD, RnfE and RnfG. It depends on FMN as a cofactor.

It is found in the cell inner membrane. In terms of biological role, part of a membrane-bound complex that couples electron transfer with translocation of ions across the membrane. The chain is Ion-translocating oxidoreductase complex subunit G from Photorhabdus laumondii subsp. laumondii (strain DSM 15139 / CIP 105565 / TT01) (Photorhabdus luminescens subsp. laumondii).